A 399-amino-acid chain; its full sequence is Carbamoyl phosphate synthase small chain (399 aa).

Residues 1–204 (MTKTTLSSDP…WNKGYTINNE (204 aa)) are CPSase. S60, G256, and G258 together coordinate L-glutamine. The 189-residue stretch at 208 to 396 (HIVAIDYGIK…HDLIVNYREQ (189 aa)) folds into the Glutamine amidotransferase type-1 domain. The active-site Nucleophile is C285. L-glutamine is bound by residues L286, Q289, N327, G329, and F330. Residues H369 and E371 contribute to the active site.

The protein belongs to the CarA family. As to quaternary structure, composed of two chains; the small (or glutamine) chain promotes the hydrolysis of glutamine to ammonia, which is used by the large (or ammonia) chain to synthesize carbamoyl phosphate. Tetramer of heterodimers (alpha,beta)4.

The catalysed reaction is hydrogencarbonate + L-glutamine + 2 ATP + H2O = carbamoyl phosphate + L-glutamate + 2 ADP + phosphate + 2 H(+). It carries out the reaction L-glutamine + H2O = L-glutamate + NH4(+). Its pathway is amino-acid biosynthesis; L-arginine biosynthesis; carbamoyl phosphate from bicarbonate: step 1/1. It participates in pyrimidine metabolism; UMP biosynthesis via de novo pathway; (S)-dihydroorotate from bicarbonate: step 1/3. Small subunit of the glutamine-dependent carbamoyl phosphate synthetase (CPSase). CPSase catalyzes the formation of carbamoyl phosphate from the ammonia moiety of glutamine, carbonate, and phosphate donated by ATP, constituting the first step of 2 biosynthetic pathways, one leading to arginine and/or urea and the other to pyrimidine nucleotides. The small subunit (glutamine amidotransferase) binds and cleaves glutamine to supply the large subunit with the substrate ammonia. The chain is Carbamoyl phosphate synthase small chain from Bartonella bacilliformis (strain ATCC 35685 / KC583 / Herrer 020/F12,63).